The sequence spans 54 residues: Lectin alpha chain (54 aa).

This sequence belongs to the leguminous lectin family. As to quaternary structure, tetramer of two alpha and two beta chains.

The protein is Lectin alpha chain of Lathyrus odoratus (Sweet pea).